We begin with the raw amino-acid sequence, 405 residues long: Alpha-1-antiproteinase S (405 aa).

An N-terminal signal peptide occupies residues 1 to 24 (MPSAIPRGLLLLAGLCCLVFGIMA). Asn57, Asn94, Asn157, and Asn258 each carry an N-linked (GlcNAc...) asparagine glycan. Residues 360 to 379 (GATMMEFMPMSLPEDLSFNK) are RCL.

The protein belongs to the serpin family.

It localises to the secreted. Inhibits elastase, chymotrypsin, cathepsin G, plasmin, and trypsin. The polypeptide is Alpha-1-antiproteinase S (Cavia porcellus (Guinea pig)).